A 381-amino-acid polypeptide reads, in one-letter code: Metacaspase-8 (381 aa).

Active-site residues include His86 and Cys140. Cys140 carries the S-nitrosocysteine modification.

Belongs to the peptidase C14B family. In terms of processing, proteolytically processed; by an autocatalytic mechanism.

In terms of biological role, cysteine protease that cleaves specifically after arginine residues. Does not cleave caspase-specific substrates. May be involved in the modulation of programmed cell death activated by oxidative stress. This is Metacaspase-8 (AMC8) from Arabidopsis thaliana (Mouse-ear cress).